The chain runs to 89 residues: Insulin (89 aa).

3 disulfide bridges follow: C7/C75, C19/C88, and C74/C79. A propeptide spans 33-66 (DVGPLSAFRDLEPPLDTEMEDRFPYRQQLAGSKM) (c peptide).

It belongs to the insulin family. Heterodimer of a B chain and an A chain linked by two disulfide bonds.

It localises to the secreted. In terms of biological role, insulin decreases blood glucose concentration. It increases cell permeability to monosaccharides, amino acids and fatty acids. It accelerates glycolysis, the pentose phosphate cycle, and glycogen synthesis in liver. This Callorhinchus milii (Ghost shark) protein is Insulin (ins).